The chain runs to 974 residues: Leucine-rich repeat receptor-like kinase protein SUNN (974 aa).

An N-terminal signal peptide occupies residues 1 to 20; the sequence is MKNITCYLLLLCMLFTTCYS. Asparagine 75, asparagine 104, asparagine 123, and asparagine 136 each carry an N-linked (GlcNAc...) asparagine glycan. 20 LRR repeats span residues 92 to 116, 117 to 141, 143 to 165, 166 to 188, 189 to 213, 238 to 262, 263 to 286, 288 to 309, 310 to 334, 335 to 358, 360 to 382, 383 to 406, 407 to 430, 431 to 454, 456 to 477, 478 to 501, 503 to 525, 527 to 549, 550 to 573, and 574 to 598; these read LNML…LSKL, TSLR…TFGM, KLEA…IVSL, MKLK…SYSE, FQKL…LSKL, IKSL…LGNL, ENLD…LSSM, SLMS…TFSK, LKNL…IGDL, PNLE…LGSN, KFIY…LCKS, KKLK…IGPC, KSLE…IFQL, PSVQ…ISGN, LGNL…MKNL, RSLQ…VFAL, VLTR…VTQC, SLTA…MKNL, KVLS…IRFM, and TSLT…QFLV. 2 N-linked (GlcNAc...) asparagine glycosylation sites follow: asparagine 250 and asparagine 274. N-linked (GlcNAc...) asparagine glycans are attached at residues asparagine 312 and asparagine 346. N-linked (GlcNAc...) asparagine glycans are attached at residues asparagine 508 and asparagine 513. N-linked (GlcNAc...) asparagine glycosylation is found at asparagine 556 and asparagine 585. The chain crosses the membrane as a helical span at residues 635 to 655; sequence VVIAIVFATAVLMVIVTLHMM. In terms of domain architecture, Protein kinase spans 685 to 972; sequence LKEENIIGKG…PPHSTSHNLI (288 aa). ATP-binding positions include 691–699 and lysine 713; that span reads IGKGGAGIV. Aspartate 810 (proton acceptor) is an active-site residue.

It belongs to the protein kinase superfamily. Ser/Thr protein kinase family. In terms of tissue distribution, expressed in roots and shoots. Expressed in the vasculature of leaves, petioles, stems and roots.

It is found in the cell membrane. It carries out the reaction L-seryl-[protein] + ATP = O-phospho-L-seryl-[protein] + ADP + H(+). The enzyme catalyses L-threonyl-[protein] + ATP = O-phospho-L-threonyl-[protein] + ADP + H(+). In terms of biological role, LRR receptor kinase involved in the regulation of root growth and root nodule organogenesis. Involved in long distance nodulation signaling events. Involved in the autoregulation of nodulation (AON), a long distance systemic signaling from root to shoot and back again, which allows legumes to limit the number of root nodules formed based on available nitrogen and previous rhizobial colonization. Acts from shoot to root to control AON. Interacts with CLE12 and CLE13 signaling to control nodule numbers. Required for the modulation of shoot-to-root auxin transport in response to altered nitrogen tissue concentrations and in the absence of rhizobia. Shoot-to-root auxin transport influences lateral root density and length. Involved in the regulation of root colonization by arbuscular mycorrhizal (AM) fungi. Interacts with CLE33 and CL53 signaling to repress strigolactone biosynthetic genes and strigolactone content in the roots, and consequently reduces the promotion of further colonization by AM fungi. In Medicago truncatula (Barrel medic), this protein is Leucine-rich repeat receptor-like kinase protein SUNN.